The primary structure comprises 395 residues: Putative carbonic anhydrase 1 (395 aa).

An N-terminal signal peptide occupies residues 1 to 24 (MKLQGAGCVVAAVLGALFIVNVES). In terms of domain architecture, Alpha-carbonic anhydrase spans 42–365 (ISYDVRSTIG…LNDRPVFLVR (324 aa)). 3 residues coordinate Zn(2+): His139, His141, and His165.

It belongs to the alpha-carbonic anhydrase family. Requires Zn(2+) as cofactor. In terms of tissue distribution, component of the acid-insoluble and acid-soluble organic matrix of calcified layers of the shell (at protein level).

The protein resides in the secreted. It carries out the reaction hydrogencarbonate + H(+) = CO2 + H2O. Its function is as follows. Reversible hydration of carbon dioxide. The chain is Putative carbonic anhydrase 1 from Lottia gigantea (Giant owl limpet).